Here is a 99-residue protein sequence, read N- to C-terminus: Small integral membrane protein 14 (99 aa).

Over 1 to 49 (MAEGGFDPCECVCSHEHAMRRLINLLRQSQSYCTDTECLQELPGPSGDN) the chain is Lumenal. Residues 50–70 (GISVTMILVAWMVIALILFLL) traverse the membrane as a helical segment. Over 71 to 99 (RPPNLRGSSLPGKPTSPHNGQDPPAPPVD) the chain is Cytoplasmic. Residues 78–99 (SSLPGKPTSPHNGQDPPAPPVD) are disordered.

It is found in the endoplasmic reticulum membrane. The protein is Small integral membrane protein 14 (SMIM14) of Homo sapiens (Human).